The following is a 177-amino-acid chain: Nucleoside triphosphate/diphosphate phosphatase (177 aa).

Arginine 23 serves as the catalytic Proton donor. Residues asparagine 87, aspartate 103, aspartate 105, aspartate 107, aspartate 120, and glutamate 123 each contribute to the Mg(2+) site.

It belongs to the Ntdp family. The cofactor is Mg(2+).

The enzyme catalyses a ribonucleoside 5'-triphosphate + H2O = a ribonucleoside 5'-diphosphate + phosphate + H(+). It catalyses the reaction a ribonucleoside 5'-diphosphate + H2O = a ribonucleoside 5'-phosphate + phosphate + H(+). Functionally, has nucleoside phosphatase activity towards nucleoside triphosphates and nucleoside diphosphates. The polypeptide is Nucleoside triphosphate/diphosphate phosphatase (Streptococcus gordonii (strain Challis / ATCC 35105 / BCRC 15272 / CH1 / DL1 / V288)).